We begin with the raw amino-acid sequence, 99 residues long: Nucleoid-associated protein SAG1747 (99 aa).

Residues 1-10 are compositionally biased toward low complexity; the sequence is MMNMQNMMRQ. The tract at residues 1–20 is disordered; it reads MMNMQNMMRQAQKLQKQMEQ.

This sequence belongs to the YbaB/EbfC family. As to quaternary structure, homodimer.

The protein localises to the cytoplasm. It localises to the nucleoid. Its function is as follows. Binds to DNA and alters its conformation. May be involved in regulation of gene expression, nucleoid organization and DNA protection. This Streptococcus agalactiae serotype V (strain ATCC BAA-611 / 2603 V/R) protein is Nucleoid-associated protein SAG1747.